Here is a 92-residue protein sequence, read N- to C-terminus: DNA-directed RNA polymerase subunit Rpo11 (92 aa).

This sequence belongs to the archaeal Rpo11/eukaryotic RPB11/RPC19 RNA polymerase subunit family. Part of the RNA polymerase complex.

It is found in the cytoplasm. It carries out the reaction RNA(n) + a ribonucleoside 5'-triphosphate = RNA(n+1) + diphosphate. In terms of biological role, DNA-dependent RNA polymerase (RNAP) catalyzes the transcription of DNA into RNA using the four ribonucleoside triphosphates as substrates. The polypeptide is DNA-directed RNA polymerase subunit Rpo11 (Methanosarcina barkeri (strain Fusaro / DSM 804)).